The sequence spans 379 residues: Probable peptidoglycan glycosyltransferase FtsW (379 aa).

Residues 1 to 15 (MHKTEAQTYLLYDRT) lie on the Cytoplasmic side of the membrane. Residues 16 to 36 (LLLLTMGLVGIGLVMVISTSM) traverse the membrane as a helical segment. Over 37-52 (PIGVRLSEDPFYFARR) the chain is Periplasmic. The chain crosses the membrane as a helical span at residues 53-73 (YAFYLGLAVVLSLVTLGIPMA). At 74–79 (SWQRGS) the chain is on the cytoplasmic side. A helical membrane pass occupies residues 80-100 (SLILLITLIMLLLVLIAGQSV). The Periplasmic segment spans residues 101-113 (NGAVRWLALGPWR). The helical transmembrane segment at 114-133 (IQPAELSKLALFCYLASYLV) threads the bilayer. Over 134 to 139 (RKAEEV) the chain is Cytoplasmic. A helical transmembrane segment spans residues 140–162 (RTNFWGFCKPIGVMVLLAILLLA). Residues 163–165 (QPD) lie on the Periplasmic side of the membrane. Residues 166–183 (LGTVLVLFITTLAMLFLA) traverse the membrane as a helical segment. Residues 184 to 186 (EAK) are Cytoplasmic-facing. A helical membrane pass occupies residues 187 to 207 (IWQFLPIIGTGILAVMLLIIA). Residues 208–269 (KPYRRRRVTS…TEAHTDFICS (62 aa)) are Periplasmic-facing. Residues 270–290 (ILGEELGYFGVLLALLMVFLV) form a helical membrane-spanning segment. The Cytoplasmic segment spans residues 291–301 (AFRAMSIGRKA). Residues 302-322 (LAINQIFSGFLACSIGIWFSF) form a helical membrane-spanning segment. At 323–342 (QTMVNVGAAAGMLPTKGLTL) the chain is on the periplasmic side. A helical membrane pass occupies residues 343–363 (PFISYGGSSMLIMLTAIVLLI). The Cytoplasmic segment spans residues 364–379 (RIDFETRLAKLQAFVR).

This sequence belongs to the SEDS family. FtsW subfamily.

It is found in the cell inner membrane. It carries out the reaction [GlcNAc-(1-&gt;4)-Mur2Ac(oyl-L-Ala-gamma-D-Glu-L-Lys-D-Ala-D-Ala)](n)-di-trans,octa-cis-undecaprenyl diphosphate + beta-D-GlcNAc-(1-&gt;4)-Mur2Ac(oyl-L-Ala-gamma-D-Glu-L-Lys-D-Ala-D-Ala)-di-trans,octa-cis-undecaprenyl diphosphate = [GlcNAc-(1-&gt;4)-Mur2Ac(oyl-L-Ala-gamma-D-Glu-L-Lys-D-Ala-D-Ala)](n+1)-di-trans,octa-cis-undecaprenyl diphosphate + di-trans,octa-cis-undecaprenyl diphosphate + H(+). It participates in cell wall biogenesis; peptidoglycan biosynthesis. In terms of biological role, peptidoglycan polymerase that is essential for cell division. The sequence is that of Probable peptidoglycan glycosyltransferase FtsW from Moranella endobia (strain PCIT).